Consider the following 258-residue polypeptide: PHD finger protein ALFIN-LIKE 1 (258 aa).

The segment covering M1–R10 has biased composition (basic and acidic residues). Disordered regions lie at residues M1 to R24 and S150 to H200. Positions G11–S21 are enriched in gly residues. The segment covering H175–K187 has biased composition (basic and acidic residues). Over residues E188–D199 the composition is skewed to acidic residues. The segment at E202–K254 adopts a PHD-type zinc-finger fold.

This sequence belongs to the Alfin family. Interacts with H3K4me3 and to a lesser extent with H3K4me2.

It localises to the nucleus. Histone-binding component that specifically recognizes H3 tails trimethylated on 'Lys-4' (H3K4me3), which mark transcription start sites of virtually all active genes. In Oryza sativa subsp. indica (Rice), this protein is PHD finger protein ALFIN-LIKE 1.